Consider the following 212-residue polypeptide: Large ribosomal subunit protein uL3 (212 aa).

The segment at 127–161 is disordered; that stretch reads NFKRGPMAHGSKNHRLPGSTGAGTTPGRVFPGKRM.

This sequence belongs to the universal ribosomal protein uL3 family. As to quaternary structure, part of the 50S ribosomal subunit. Forms a cluster with proteins L14 and L19.

Its function is as follows. One of the primary rRNA binding proteins, it binds directly near the 3'-end of the 23S rRNA, where it nucleates assembly of the 50S subunit. The polypeptide is Large ribosomal subunit protein uL3 (Thermosynechococcus vestitus (strain NIES-2133 / IAM M-273 / BP-1)).